Reading from the N-terminus, the 550-residue chain is Methionine--tRNA ligase (550 aa).

Positions 13 to 23 (PYANGPLHFGH) match the 'HIGH' region motif. Zn(2+) contacts are provided by C145, C148, C158, and C161. The short motif at 331–335 (QFSKS) is the 'KMSKS' region element. K334 lines the ATP pocket.

It belongs to the class-I aminoacyl-tRNA synthetase family. MetG type 1 subfamily. Monomer. Zn(2+) serves as cofactor.

The protein localises to the cytoplasm. The catalysed reaction is tRNA(Met) + L-methionine + ATP = L-methionyl-tRNA(Met) + AMP + diphosphate. Its function is as follows. Is required not only for elongation of protein synthesis but also for the initiation of all mRNA translation through initiator tRNA(fMet) aminoacylation. This chain is Methionine--tRNA ligase (metG), found in Chlamydia trachomatis serovar D (strain ATCC VR-885 / DSM 19411 / UW-3/Cx).